Consider the following 418-residue polypeptide: MSRAKFERKKPHVNIGTIGHVDHGKTTLTAAITMTLAAAGGSVGKKYDEIDSAPEEKARGITINTAHVEYETEKRHYAHVDCPGHADYVKNMITGAAQMDGAILVVSGADGPMPQTKEHILLAKQVGVPNVVVFLNKEDQVDDKELLELVELEVRETLDKYEFPGDEIPVVPGSALLALEALIENPKTQRGENKWVDKIYQLMDNVDSYIPTPQRETDKPFLLAVEDVLSITGRGTVATGRVERGALRISDNVEIVGLRPTQTAVVTGLEMFKKTLDETLAGDNVGVLLRGVQKKDIERGMVIAKPGTITPHTKFEAQVYVLTKEEGGRHSAFMIGYQPQFYVRTTDVTGKVVGFNHIQMRNPSSVAEEHSNKMAMPGDRISMTVELINPIAIEKGMRFAIREGGRTVGAGVVTNIVQ.

The region spanning 10-214 (KPHVNIGTIG…NVDSYIPTPQ (205 aa)) is the tr-type G domain. Residues 19–26 (GHVDHGKT) are G1. 19 to 26 (GHVDHGKT) contacts GTP. Residue Thr-26 participates in Mg(2+) binding. The segment at 60 to 64 (GITIN) is G2. The interval 81 to 84 (DCPG) is G3. GTP is bound by residues 81–85 (DCPGH) and 136–139 (NKED). Positions 136-139 (NKED) are G4. The G5 stretch occupies residues 174-176 (SAL).

The protein belongs to the TRAFAC class translation factor GTPase superfamily. Classic translation factor GTPase family. EF-Tu/EF-1A subfamily.

The protein resides in the plastid. It is found in the chloroplast. The enzyme catalyses GTP + H2O = GDP + phosphate + H(+). Its function is as follows. GTP hydrolase that promotes the GTP-dependent binding of aminoacyl-tRNA to the A-site of ribosomes during protein biosynthesis. This is Elongation factor Tu, chloroplastic (tufA) from Chlamydomonas reinhardtii (Chlamydomonas smithii).